Reading from the N-terminus, the 320-residue chain is 3-oxoacyl-[acyl-carrier-protein] reductase 1, chloroplastic (320 aa).

Residues Met-1 to Gln-60 constitute a chloroplast transit peptide. Residue Val-82–Val-106 participates in NADP(+) binding. Ser-214 lines the substrate pocket. The active-site Proton acceptor is Tyr-227.

This sequence belongs to the short-chain dehydrogenases/reductases (SDR) family. Homotetramer.

It localises to the plastid. The protein localises to the chloroplast. It catalyses the reaction a (3R)-hydroxyacyl-[ACP] + NADP(+) = a 3-oxoacyl-[ACP] + NADPH + H(+). The protein operates within lipid metabolism; fatty acid biosynthesis. In Brassica napus (Rape), this protein is 3-oxoacyl-[acyl-carrier-protein] reductase 1, chloroplastic (gbkr1).